Consider the following 65-residue polypeptide: Large ribosomal subunit protein uL29 (65 aa).

The protein belongs to the universal ribosomal protein uL29 family.

The protein is Large ribosomal subunit protein uL29 of Buchnera aphidicola subsp. Acyrthosiphon pisum (strain 5A).